Reading from the N-terminus, the 340-residue chain is Fructose-1,6-bisphosphatase class 1 (340 aa).

Residues E107, D126, L128, and D129 each contribute to the Mg(2+) site. N215 is a binding site for substrate. E287 serves as a coordination point for Mg(2+).

It belongs to the FBPase class 1 family. In terms of assembly, homotetramer. Requires Mg(2+) as cofactor.

The protein resides in the cytoplasm. The enzyme catalyses beta-D-fructose 1,6-bisphosphate + H2O = beta-D-fructose 6-phosphate + phosphate. Its pathway is carbohydrate biosynthesis; gluconeogenesis. The protein is Fructose-1,6-bisphosphatase class 1 of Brucella anthropi (strain ATCC 49188 / DSM 6882 / CCUG 24695 / JCM 21032 / LMG 3331 / NBRC 15819 / NCTC 12168 / Alc 37) (Ochrobactrum anthropi).